The following is a 393-amino-acid chain: MMTKEAPLIALVAGEISGDILGAGLINALKLHYPNARFIGVAGPRMIQAGCETLFDMEELAVMGLAEVVKHLPRLLKRRKQVIETMLAEKPDIFIGIDAPDFNLTVEEKLKASGIKTIHYVSPSVWAWRQNRVHKIARATNLVLAFLPFEKAFYDRFNVPCRFIGHTMADTIALKPNRAEACVGLNLDEAQRYLAILVGSRASEVGFLAEPFLKAAQILKQQYPDLQFLVPLVNDKRIAQFEQIKAQVAPELSVHILKGNARQAMIAAEASLLASGTAALEGMLCKSPMVVGYKMKAMTYWLAKRLVKTKYISLPNLLADEMLVPELIQDECNPENLAWYLGNYLADDADHRKQRNELKQRFTELHKLIQCDADAQAAQAVVDVLEANTSDQN.

The protein belongs to the LpxB family.

The enzyme catalyses a lipid X + a UDP-2-N,3-O-bis[(3R)-3-hydroxyacyl]-alpha-D-glucosamine = a lipid A disaccharide + UDP + H(+). It functions in the pathway bacterial outer membrane biogenesis; LPS lipid A biosynthesis. Its function is as follows. Condensation of UDP-2,3-diacylglucosamine and 2,3-diacylglucosamine-1-phosphate to form lipid A disaccharide, a precursor of lipid A, a phosphorylated glycolipid that anchors the lipopolysaccharide to the outer membrane of the cell. The polypeptide is Lipid-A-disaccharide synthase (Actinobacillus pleuropneumoniae serotype 5b (strain L20)).